The sequence spans 302 residues: Acetylglutamate kinase (302 aa).

Residues Gly-67–Gly-68, Arg-89, and Asn-194 each bind substrate.

This sequence belongs to the acetylglutamate kinase family. ArgB subfamily.

It is found in the cytoplasm. The enzyme catalyses N-acetyl-L-glutamate + ATP = N-acetyl-L-glutamyl 5-phosphate + ADP. Its pathway is amino-acid biosynthesis; L-arginine biosynthesis; N(2)-acetyl-L-ornithine from L-glutamate: step 2/4. Functionally, catalyzes the ATP-dependent phosphorylation of N-acetyl-L-glutamate. The chain is Acetylglutamate kinase from Hahella chejuensis (strain KCTC 2396).